Reading from the N-terminus, the 429-residue chain is GTPase Obg (429 aa).

Positions 1–158 constitute an Obg domain; sequence MFVDHVKIYV…LNVILELKVL (158 aa). Residues 119–143 are disordered; it reads AGRGGRGNSRFATPANPAPELSEKG. Residues 159 to 329 enclose the OBG-type G domain; the sequence is ADVGLVGFPS…LLFAIADLLE (171 aa). GTP is bound by residues 165–172, 190–194, 212–215, 282–285, and 310–312; these read GFPSVGKS, FTTIV, DLPG, NKMD, and SAV. The Mg(2+) site is built by Ser-172 and Thr-192. Residues 351-429 form the OCT domain; that stretch reads KHEAKGEDFE…LQEFEFEFVD (79 aa).

It belongs to the TRAFAC class OBG-HflX-like GTPase superfamily. OBG GTPase family. In terms of assembly, monomer. Requires Mg(2+) as cofactor.

Its subcellular location is the cytoplasm. Functionally, an essential GTPase which binds GTP, GDP and possibly (p)ppGpp with moderate affinity, with high nucleotide exchange rates and a fairly low GTP hydrolysis rate. Plays a role in control of the cell cycle, stress response, ribosome biogenesis and in those bacteria that undergo differentiation, in morphogenesis control. The chain is GTPase Obg from Lysinibacillus sphaericus (strain C3-41).